The chain runs to 203 residues: Small ribosomal subunit protein uS4c (203 aa).

Residues 17–39 (TLPGLTTKKSNKLNRPGKDGNTD) are disordered. Residues 92–164 (MRLDTLCFTL…IKNNQVREIP (73 aa)) form the S4 RNA-binding domain.

It belongs to the universal ribosomal protein uS4 family. As to quaternary structure, part of the 30S ribosomal subunit. Contacts protein S5. The interaction surface between S4 and S5 is involved in control of translational fidelity.

It is found in the plastid. It localises to the chloroplast. Functionally, one of the primary rRNA binding proteins, it binds directly to 16S rRNA where it nucleates assembly of the body of the 30S subunit. In terms of biological role, with S5 and S12 plays an important role in translational accuracy. The sequence is that of Small ribosomal subunit protein uS4c (rps4) from Phaeodactylum tricornutum (strain CCAP 1055/1).